Reading from the N-terminus, the 172-residue chain is Protein-export protein SecB (172 aa).

The protein belongs to the SecB family. Homotetramer, a dimer of dimers. One homotetramer interacts with 1 SecA dimer.

The protein localises to the cytoplasm. Its function is as follows. One of the proteins required for the normal export of preproteins out of the cell cytoplasm. It is a molecular chaperone that binds to a subset of precursor proteins, maintaining them in a translocation-competent state. It also specifically binds to its receptor SecA. In Ralstonia pickettii (strain 12J), this protein is Protein-export protein SecB.